Reading from the N-terminus, the 155-residue chain is 17.4 kDa class III heat shock protein (155 aa).

In terms of domain architecture, sHSP spans 35 to 155 (GRGSSNNIPI…KPKTVQIAVS (121 aa)).

Belongs to the small heat shock protein (HSP20) family. As to quaternary structure, may form oligomeric structures.

The protein localises to the cytoplasm. This chain is 17.4 kDa class III heat shock protein (HSP17.4B), found in Arabidopsis thaliana (Mouse-ear cress).